The primary structure comprises 634 residues: 3-dehydroshikimate dehydratase (634 aa).

The a divalent metal cation site is built by E134, D165, Q191, and E239. 2 consecutive VOC domains span residues 295–414 (GIEF…LVER) and 440–590 (RVDH…VFTE). Positions 443, 521, and 599 each coordinate Mg(2+).

Belongs to the bacterial two-domain DSD family. Homodimer. Requires Co(2+) as cofactor. Ni(2+) is required as a cofactor. It depends on Mg(2+) as a cofactor. Mn(2+) serves as cofactor.

The enzyme catalyses 3-dehydroshikimate = 3,4-dihydroxybenzoate + H2O. Its pathway is aromatic compound metabolism; 3,4-dihydroxybenzoate biosynthesis. Functionally, catalyzes the conversion of 3-dehydroshikimate to protocatechuate (3,4-dihydroxybenzoate), a common intermediate of quinate and shikimate degradation pathways. Is required for growth on either quinate or shikimate as a sole carbon source. The protein is 3-dehydroshikimate dehydratase of Pseudomonas aeruginosa (strain ATCC 15692 / DSM 22644 / CIP 104116 / JCM 14847 / LMG 12228 / 1C / PRS 101 / PAO1).